The sequence spans 858 residues: Cone cGMP-specific 3',5'-cyclic phosphodiesterase subunit alpha' (858 aa).

GAF domains are found at residues 75-224 and 256-433; these read TPEQ…SIIL and DVER…GWSL. Residues S97, D116, 169-172, and T176 contribute to the 3',5'-cyclic GMP site; that span reads DKQT. Residues 486 to 819 form the PDEase domain; it reads EEKQLVAILK…VEWKSLADEY (334 aa). H562 serves as the catalytic Proton donor. A divalent metal cation is bound by residues H566, H602, D603, and D723. Residues 830-852 show a composition bias toward basic and acidic residues; sequence AKKQEGGAEKAAEDSGGGDDKKS. The interval 830-858 is disordered; that stretch reads AKKQEGGAEKAAEDSGGGDDKKSKTCLML. Cysteine methyl ester is present on C855. C855 carries the S-geranylgeranyl cysteine lipid modification. A propeptide spans 856–858 (removed in mature form); that stretch reads LML.

The protein belongs to the cyclic nucleotide phosphodiesterase family. Composed of two alpha' subunits that are associated with 3 smaller proteins of 11, 13, and 15 kDa. It depends on a divalent metal cation as a cofactor.

The protein resides in the cell membrane. The enzyme catalyses 3',5'-cyclic GMP + H2O = GMP + H(+). As cone-specific cGMP phosphodiesterase, it plays an essential role in light detection and cone phototransduction by rapidly decreasing intracellular levels of cGMP. The polypeptide is Cone cGMP-specific 3',5'-cyclic phosphodiesterase subunit alpha' (PDE6C) (Homo sapiens (Human)).